Here is a 376-residue protein sequence, read N- to C-terminus: Peroxisomal targeting signal 2 receptor (376 aa).

WD repeat units follow at residues 58–98 (DTQD…YPVM), 102–142 (EHQR…NTSL), 182–222 (DNND…PLFM), 226–267 (AHNG…PNVH), 279–319 (GHEF…TSRV), and 339–376 (AHTE…QRLQ).

This sequence belongs to the WD repeat peroxin-7 family. Interacts with PEX20. Post-translationally, polyubiquitinated, leading to its degradation by the proteasome. Ubiquitination is dependent of PEX5 and PEX20 and takes place following recycling into the cytosol.

It localises to the cytoplasm. It is found in the cytosol. Its subcellular location is the peroxisome matrix. In terms of biological role, receptor required for the peroxisomal import of proteins containing a C-terminal PTS2-type peroxisomal targeting signal, such as 3-oxoacyl-CoA thiolase. Specifically binds to cargo proteins containing a PTS2 peroxisomal targeting signal in the cytosol. Cargo protein-binding triggers interaction with PEX20 and formation of a ternary complex composed of PEX20 and PEX7 along with PTS2-containing cargo proteins, which is tranlocated into peroxisomes by passing through the peroxisomal docking complex. PEX7 receptor is then retrotranslocated into the cytosol, where it is ubiquitinated and degraded. The protein is Peroxisomal targeting signal 2 receptor of Komagataella phaffii (strain GS115 / ATCC 20864) (Yeast).